A 262-amino-acid polypeptide reads, in one-letter code: Phosphonates import ATP-binding protein PhnC (262 aa).

In terms of domain architecture, ABC transporter spans 5 to 253 (IRVEKLAKTF…RFDHLYRSIN (249 aa)). An ATP-binding site is contributed by 37 to 44 (GPSGSGKS).

It belongs to the ABC transporter superfamily. Phosphonates importer (TC 3.A.1.9.1) family. The complex is composed of two ATP-binding proteins (PhnC), two transmembrane proteins (PhnE) and a solute-binding protein (PhnD).

The protein localises to the cell inner membrane. It carries out the reaction phosphonate(out) + ATP + H2O = phosphonate(in) + ADP + phosphate + H(+). In terms of biological role, part of the ABC transporter complex PhnCDE involved in phosphonates import. Responsible for energy coupling to the transport system. In Shigella flexneri serotype 5b (strain 8401), this protein is Phosphonates import ATP-binding protein PhnC.